The chain runs to 353 residues: Histidinol-phosphate aminotransferase (353 aa).

N6-(pyridoxal phosphate)lysine is present on Lys209.

Belongs to the class-II pyridoxal-phosphate-dependent aminotransferase family. Histidinol-phosphate aminotransferase subfamily. As to quaternary structure, homodimer. Pyridoxal 5'-phosphate is required as a cofactor.

The catalysed reaction is L-histidinol phosphate + 2-oxoglutarate = 3-(imidazol-4-yl)-2-oxopropyl phosphate + L-glutamate. The protein operates within amino-acid biosynthesis; L-histidine biosynthesis; L-histidine from 5-phospho-alpha-D-ribose 1-diphosphate: step 7/9. The polypeptide is Histidinol-phosphate aminotransferase (Buchnera aphidicola subsp. Cinara cedri (strain Cc)).